A 485-amino-acid chain; its full sequence is MTHWIAGEWVQGQGEEFVSLSPYNQEVIWRGNGATAEQVDQAVAAARAAFVEWKKRPFAEREAIVLAFAEKVKENSEKIAEVIAKETGKPIWETRTEAAAMAGKIAISIRAYHDRTGEATREAAGNQIVLRHRPLGVMAVFGPYNFPGHLPNGHIVPALLAGNTVVFKPSEQTPWTGELAMKLWEEAGLPKGVINLVQGAKETGIALADAKGIDGILFTGSANTGHILHRQFAGQPGKMLALEMGGNNPMVISDNYGDLDATVYTIIQSAFISAGQRCTCARRLYVPFGEKGDALITKLVEATKNIRMDQPFAEPAPFMGPQISVAAAKFILDAQANLQSLGGESLIEAKAGEAAFVSPGIIDVTNIAELPDEEYFGPLLQVVRYEGLDKAVELANDTRFGLSAGLVSTDDQEWEYFVDHIRAGIVNRNRQLTGASGDAPFGGPGASGNLRPSAYYAADYCAYPMASMEGQETELPATLSPGVTL.

Residue 220–225 (GSANTG) coordinates NAD(+). Catalysis depends on residues Glu243 and Cys278.

This sequence belongs to the aldehyde dehydrogenase family. AstD subfamily.

It catalyses the reaction N-succinyl-L-glutamate 5-semialdehyde + NAD(+) + H2O = N-succinyl-L-glutamate + NADH + 2 H(+). The protein operates within amino-acid degradation; L-arginine degradation via AST pathway; L-glutamate and succinate from L-arginine: step 4/5. Functionally, catalyzes the NAD-dependent reduction of succinylglutamate semialdehyde into succinylglutamate. The sequence is that of N-succinylglutamate 5-semialdehyde dehydrogenase from Vibrio parahaemolyticus serotype O3:K6 (strain RIMD 2210633).